Reading from the N-terminus, the 848-residue chain is Aryl hydrocarbon receptor (848 aa).

M1 is modified (N-acetylmethionine). Residues 1-10 (MNSSSANITY) constitute a propeptide that is removed on maturation. Residues 1–10 (MNSSSANITY) show a composition bias toward polar residues. The interval 1-39 (MNSSSANITYASRKRRKPVQKTVKPIPAEGIKSNPSKRH) is disordered. 2 consecutive short sequence motifs (nuclear localization signal) follow at residues 13-16 (RKRR) and 37-42 (KRHRDR). The bHLH domain occupies 27–80 (PAEGIKSNPSKRHRDRLNTELDRLASLLPFPQDVINKLDKLSVLRLSVSYLRAK). Residues 38–66 (RHRDRLNTELDRLASLLPFPQDVINKLDK) form a DNA-binding region. Required for maintaining the overall integrity of the AHR:ARNT heterodimer and its transcriptional activity stretches follow at residues 50-82 (LASL…AKSF), 118-126 (LLQALNGFV), and 266-268 (FAI). The short motif at 64-72 (LDKLSVLRL) is the Nuclear export signal element. In terms of domain architecture, PAS 1 spans 111–181 (NLQEGEFLLQ…RQLHWALNPS (71 aa)). One can recognise a PAS 2 domain in the interval 275–342 (PSILEIRTKN…CAESHIRMIK (68 aa)). One can recognise a PAC domain in the interval 348–386 (MIVFRLLTKNNRWTWVQSNARLLYKNGRPDYIIVTQRPL). Positions 824 to 848 (TTHLQPLHHPSEARPFPDLTSSGFL) are disordered.

As to quaternary structure, homodimer. Heterodimer; efficient DNA binding requires dimerization with another bHLH protein. Interacts with ARNT; the heterodimer ARNT:AHR binds to core DNA sequence 5'-TGCGTG-3' within the dioxin response element (DRE) of target gene promoters and activates their transcription. Binds MYBBP1A. Interacts with coactivators including SRC-1, RIP140 and NOCA7, and with the corepressor SMRT. Interacts with NEDD8 and IVNS1ABP. Interacts with BMAL1. Interacts with HSP90AB1. Interacts with TIPARP; leading to mono-ADP-ribosylation of AHR and subsequent inhibition of AHR. In terms of processing, mono-ADP-ribosylated, leading to inhibit transcription activator activity of AHR. In terms of tissue distribution, expressed in all tissues tested including blood, brain, heart, kidney, liver, lung, pancreas and skeletal muscle. Expressed in retinal photoreceptors.

Its subcellular location is the cytoplasm. It localises to the nucleus. Functionally, ligand-activated transcription factor that enables cells to adapt to changing conditions by sensing compounds from the environment, diet, microbiome and cellular metabolism, and which plays important roles in development, immunity and cancer. Upon ligand binding, translocates into the nucleus, where it heterodimerizes with ARNT and induces transcription by binding to xenobiotic response elements (XRE). Regulates a variety of biological processes, including angiogenesis, hematopoiesis, drug and lipid metabolism, cell motility and immune modulation. Xenobiotics can act as ligands: upon xenobiotic-binding, activates the expression of multiple phase I and II xenobiotic chemical metabolizing enzyme genes (such as the CYP1A1 gene). Mediates biochemical and toxic effects of halogenated aromatic hydrocarbons. Next to xenobiotics, natural ligands derived from plants, microbiota, and endogenous metabolism are potent AHR agonists. Tryptophan (Trp) derivatives constitute an important class of endogenous AHR ligands. Acts as a negative regulator of anti-tumor immunity: indoles and kynurenic acid generated by Trp catabolism act as ligand and activate AHR, thereby promoting AHR-driven cancer cell motility and suppressing adaptive immunity. Regulates the circadian clock by inhibiting the basal and circadian expression of the core circadian component PER1. Inhibits PER1 by repressing the CLOCK-BMAL1 heterodimer mediated transcriptional activation of PER1. The heterodimer ARNT:AHR binds to core DNA sequence 5'-TGCGTG-3' within the dioxin response element (DRE) of target gene promoters and activates their transcription. In Homo sapiens (Human), this protein is Aryl hydrocarbon receptor.